Here is a 495-residue protein sequence, read N- to C-terminus: Glycerol kinase (495 aa).

Threonine 11 contributes to the ADP binding site. Threonine 11, threonine 12, and serine 13 together coordinate ATP. Threonine 11 is a binding site for sn-glycerol 3-phosphate. Arginine 15 contacts ADP. Sn-glycerol 3-phosphate-binding residues include arginine 81, glutamate 82, tyrosine 133, and aspartate 242. Arginine 81, glutamate 82, tyrosine 133, aspartate 242, and glutamine 243 together coordinate glycerol. Residues threonine 264 and glycine 307 each coordinate ADP. Residues threonine 264, glycine 307, glutamine 311, and glycine 408 each coordinate ATP. ADP-binding residues include glycine 408 and asparagine 412.

This sequence belongs to the FGGY kinase family.

It catalyses the reaction glycerol + ATP = sn-glycerol 3-phosphate + ADP + H(+). It participates in polyol metabolism; glycerol degradation via glycerol kinase pathway; sn-glycerol 3-phosphate from glycerol: step 1/1. With respect to regulation, inhibited by fructose 1,6-bisphosphate (FBP). Functionally, key enzyme in the regulation of glycerol uptake and metabolism. Catalyzes the phosphorylation of glycerol to yield sn-glycerol 3-phosphate. The protein is Glycerol kinase of Acinetobacter baylyi (strain ATCC 33305 / BD413 / ADP1).